Reading from the N-terminus, the 238-residue chain is 1-(5-phosphoribosyl)-5-[(5-phosphoribosylamino)methylideneamino] imidazole-4-carboxamide isomerase (238 aa).

Aspartate 7 functions as the Proton acceptor in the catalytic mechanism. Aspartate 129 functions as the Proton donor in the catalytic mechanism.

The protein belongs to the HisA/HisF family.

It localises to the cytoplasm. It catalyses the reaction 1-(5-phospho-beta-D-ribosyl)-5-[(5-phospho-beta-D-ribosylamino)methylideneamino]imidazole-4-carboxamide = 5-[(5-phospho-1-deoxy-D-ribulos-1-ylimino)methylamino]-1-(5-phospho-beta-D-ribosyl)imidazole-4-carboxamide. Its pathway is amino-acid biosynthesis; L-histidine biosynthesis; L-histidine from 5-phospho-alpha-D-ribose 1-diphosphate: step 4/9. This chain is 1-(5-phosphoribosyl)-5-[(5-phosphoribosylamino)methylideneamino] imidazole-4-carboxamide isomerase, found in Leuconostoc mesenteroides subsp. mesenteroides (strain ATCC 8293 / DSM 20343 / BCRC 11652 / CCM 1803 / JCM 6124 / NCDO 523 / NBRC 100496 / NCIMB 8023 / NCTC 12954 / NRRL B-1118 / 37Y).